The following is a 284-amino-acid chain: L-ribulose-5-phosphate 3-epimerase UlaE (284 aa).

This sequence belongs to the L-ribulose-5-phosphate 3-epimerase family.

The enzyme catalyses L-ribulose 5-phosphate = L-xylulose 5-phosphate. Its pathway is cofactor degradation; L-ascorbate degradation; D-xylulose 5-phosphate from L-ascorbate: step 3/4. Functionally, catalyzes the isomerization of L-xylulose-5-phosphate to L-ribulose-5-phosphate. Is involved in the anaerobic L-ascorbate utilization. In Escherichia coli O139:H28 (strain E24377A / ETEC), this protein is L-ribulose-5-phosphate 3-epimerase UlaE.